We begin with the raw amino-acid sequence, 547 residues long: Pyochelin synthase PchD (547 aa).

This sequence belongs to the ATP-dependent AMP-binding enzyme family.

It catalyses the reaction salicylate + holo-[ACP] + ATP = salicyl-[ACP] + AMP + diphosphate. It functions in the pathway siderophore biosynthesis. Its pathway is antifungal biosynthesis. In terms of biological role, involved in the biosynthesis of the siderophore pyochelin. Specifically adenylates salicylate and loads it onto the holo form of PchE via a thioester linkage to the phosphopanthetheine moiety. Is also involved in the synthesis of the antifungal antibiotic dihydroaeruginoic acid (Dha or hydroxyphenyl-thiazolinyl-carboxylate), a precursor of pyochelin. The chain is Pyochelin synthase PchD from Pseudomonas aeruginosa (strain ATCC 15692 / DSM 22644 / CIP 104116 / JCM 14847 / LMG 12228 / 1C / PRS 101 / PAO1).